Here is a 555-residue protein sequence, read N- to C-terminus: 2-isopropylmalate synthase (555 aa).

In terms of domain architecture, Pyruvate carboxyltransferase spans Pro-30 to Asn-303. Asp-39, His-242, His-244, and Asn-278 together coordinate Mg(2+). The tract at residues Gln-437–Lys-555 is regulatory domain.

Belongs to the alpha-IPM synthase/homocitrate synthase family. LeuA type 2 subfamily. In terms of assembly, homodimer. Mg(2+) serves as cofactor.

Its subcellular location is the cytoplasm. It catalyses the reaction 3-methyl-2-oxobutanoate + acetyl-CoA + H2O = (2S)-2-isopropylmalate + CoA + H(+). The protein operates within amino-acid biosynthesis; L-leucine biosynthesis; L-leucine from 3-methyl-2-oxobutanoate: step 1/4. Its function is as follows. Catalyzes the condensation of the acetyl group of acetyl-CoA with 3-methyl-2-oxobutanoate (2-ketoisovalerate) to form 3-carboxy-3-hydroxy-4-methylpentanoate (2-isopropylmalate). This chain is 2-isopropylmalate synthase, found in Brucella melitensis biotype 1 (strain ATCC 23456 / CCUG 17765 / NCTC 10094 / 16M).